We begin with the raw amino-acid sequence, 657 residues long: Probable serine/threonine-protein kinase CA_C1728 (657 aa).

A Protein kinase domain is found at 10-274; that stretch reads YKIEEEIGVG…ELSNVKNNYV (265 aa). Residues 16–24 and Lys-39 each bind ATP; that span reads IGVGGTAVV. Asp-143 functions as the Proton acceptor in the catalytic mechanism. The disordered stretch occupies residues 286–334; the sequence is PAQIQNESNPNNKLDNDDTYYNGEPYNKEQPQEEPQEENEEPKNKIKGN. Positions 288–298 are enriched in polar residues; that stretch reads QIQNESNPNNK. 3 PASTA domains span residues 375–441, 443–509, and 512–577; these read SVSK…DISS, DTDQ…VISR, and EVKK…VIGR. The segment at 581 to 657 is disordered; sequence TAVQPPNNNN…TNTPNGTGQK (77 aa). Composition is skewed to low complexity over residues 584–600, 613–637, and 645–657; these read QPPNNNNGNGNQNQNQN, PTGGNNDNQNQNNTTNPNGTQPAGG, and GNVTNTPNGTGQK.

This sequence belongs to the protein kinase superfamily. Ser/Thr protein kinase family.

The catalysed reaction is L-seryl-[protein] + ATP = O-phospho-L-seryl-[protein] + ADP + H(+). It catalyses the reaction L-threonyl-[protein] + ATP = O-phospho-L-threonyl-[protein] + ADP + H(+). This Clostridium acetobutylicum (strain ATCC 824 / DSM 792 / JCM 1419 / IAM 19013 / LMG 5710 / NBRC 13948 / NRRL B-527 / VKM B-1787 / 2291 / W) protein is Probable serine/threonine-protein kinase CA_C1728.